A 944-amino-acid chain; its full sequence is Proline and serine-rich protein 1 (944 aa).

N-acetylmethionine is present on Met1. Disordered stretches follow at residues 233–285, 369–396, 608–633, and 912–944; these read PPPY…PVPT, PGPSATPTAATPTPGPTPRSTLGSSEAF, KTEPTSPTPSAFKGPSHSGNPSHGTL, and ESYPAQPDGFPSYPSAPGTPFSLQPSLSQSGWQ. A compositionally biased stretch (polar residues) spans 248–274; the sequence is LSNPSKPIQNQTFSTPASQLFSPHGSN. The span at 275–285 shows a compositional bias: low complexity; sequence PSTPAATPVPT. Polar residues predominate over residues 932 to 944; that stretch reads FSLQPSLSQSGWQ.

As to quaternary structure, interacts with TET2 and OGT; this interaction mediates TET2 O-GlcNAcylation and stability by promoting the interaction between OGT and TET2. Interacts with KDM6A. Interacts with TET1. In terms of processing, glycosylated. Interaction with OGT leads to GlcNAcylation.

In terms of biological role, mediates OGT interaction with and O-GlcNAcylation of TET2 to control TET2 stabilization at enhancers and CpG islands (CGIs). The polypeptide is Proline and serine-rich protein 1 (Homo sapiens (Human)).